A 176-amino-acid polypeptide reads, in one-letter code: ATP-dependent protease subunit HslV (176 aa).

Residue Thr2 is part of the active site. Residues Gly157, Cys160, and Thr163 each coordinate Na(+).

It belongs to the peptidase T1B family. HslV subfamily. In terms of assembly, a double ring-shaped homohexamer of HslV is capped on each side by a ring-shaped HslU homohexamer. The assembly of the HslU/HslV complex is dependent on binding of ATP.

The protein localises to the cytoplasm. The catalysed reaction is ATP-dependent cleavage of peptide bonds with broad specificity.. With respect to regulation, allosterically activated by HslU binding. Its function is as follows. Protease subunit of a proteasome-like degradation complex believed to be a general protein degrading machinery. The sequence is that of ATP-dependent protease subunit HslV from Escherichia coli O45:K1 (strain S88 / ExPEC).